The primary structure comprises 302 residues: ATP synthase subunit a (302 aa).

A run of 7 helical transmembrane segments spans residues 61–81 (VDSL…FWLG), 119–139 (IAPL…MDLI), 148–168 (FEWV…FKIV), 172–192 (DPNI…FLTI), 214–234 (PVVK…ALLA), 252–272 (FVFI…AWPW), and 273–293 (AVFH…LTIV).

This sequence belongs to the ATPase A chain family. In terms of assembly, F-type ATPases have 2 components, CF(1) - the catalytic core - and CF(0) - the membrane proton channel. CF(1) has five subunits: alpha(3), beta(3), gamma(1), delta(1), epsilon(1). CF(0) has three main subunits: a(1), b(2) and c(9-12). The alpha and beta chains form an alternating ring which encloses part of the gamma chain. CF(1) is attached to CF(0) by a central stalk formed by the gamma and epsilon chains, while a peripheral stalk is formed by the delta and b chains.

Its subcellular location is the cell inner membrane. Its function is as follows. Key component of the proton channel; it plays a direct role in the translocation of protons across the membrane. The polypeptide is ATP synthase subunit a (Alcanivorax borkumensis (strain ATCC 700651 / DSM 11573 / NCIMB 13689 / SK2)).